The following is a 296-amino-acid chain: tRNA dimethylallyltransferase (296 aa).

An ATP-binding site is contributed by 2–9 (GPTASGKT). 4–9 (TASGKT) lines the substrate pocket. Interaction with substrate tRNA stretches follow at residues 27–30 (DSAL), 151–155 (QRLSR), and 232–237 (RCVGYR).

It belongs to the IPP transferase family. In terms of assembly, monomer. Requires Mg(2+) as cofactor.

The catalysed reaction is adenosine(37) in tRNA + dimethylallyl diphosphate = N(6)-dimethylallyladenosine(37) in tRNA + diphosphate. Its function is as follows. Catalyzes the transfer of a dimethylallyl group onto the adenine at position 37 in tRNAs that read codons beginning with uridine, leading to the formation of N6-(dimethylallyl)adenosine (i(6)A). The sequence is that of tRNA dimethylallyltransferase from Shewanella sp. (strain MR-4).